The sequence spans 252 residues: Ubiquinone/menaquinone biosynthesis C-methyltransferase UbiE (252 aa).

Residues T75, D96, and N123–A124 contribute to the S-adenosyl-L-methionine site.

The protein belongs to the class I-like SAM-binding methyltransferase superfamily. MenG/UbiE family.

The catalysed reaction is a 2-demethylmenaquinol + S-adenosyl-L-methionine = a menaquinol + S-adenosyl-L-homocysteine + H(+). It catalyses the reaction a 2-methoxy-6-(all-trans-polyprenyl)benzene-1,4-diol + S-adenosyl-L-methionine = a 5-methoxy-2-methyl-3-(all-trans-polyprenyl)benzene-1,4-diol + S-adenosyl-L-homocysteine + H(+). Its pathway is quinol/quinone metabolism; menaquinone biosynthesis; menaquinol from 1,4-dihydroxy-2-naphthoate: step 2/2. It functions in the pathway cofactor biosynthesis; ubiquinone biosynthesis. Its function is as follows. Methyltransferase required for the conversion of demethylmenaquinol (DMKH2) to menaquinol (MKH2) and the conversion of 2-polyprenyl-6-methoxy-1,4-benzoquinol (DDMQH2) to 2-polyprenyl-3-methyl-6-methoxy-1,4-benzoquinol (DMQH2). The polypeptide is Ubiquinone/menaquinone biosynthesis C-methyltransferase UbiE (Methylobacterium nodulans (strain LMG 21967 / CNCM I-2342 / ORS 2060)).